We begin with the raw amino-acid sequence, 350 residues long: DNA-directed RNA polymerase subunit alpha (350 aa).

The interval 1 to 226 (MLISQRPTLS…ELFGLARELN (226 aa)) is alpha N-terminal domain (alpha-NTD). The tract at residues 241 to 350 (ADHIASFALP…NQDYAETEQL (110 aa)) is alpha C-terminal domain (alpha-CTD). The segment at 326–350 (ATGTWNSDAGYDLEDNQDYAETEQL) is disordered. Positions 336 to 350 (YDLEDNQDYAETEQL) are enriched in acidic residues.

The protein belongs to the RNA polymerase alpha chain family. Homodimer. The RNAP catalytic core consists of 2 alpha, 1 beta, 1 beta' and 1 omega subunit. When a sigma factor is associated with the core the holoenzyme is formed, which can initiate transcription.

The catalysed reaction is RNA(n) + a ribonucleoside 5'-triphosphate = RNA(n+1) + diphosphate. In terms of biological role, DNA-dependent RNA polymerase catalyzes the transcription of DNA into RNA using the four ribonucleoside triphosphates as substrates. In Mycobacterium sp. (strain JLS), this protein is DNA-directed RNA polymerase subunit alpha.